Consider the following 141-residue polypeptide: Galactose-6-phosphate isomerase subunit LacA (141 aa).

The protein belongs to the LacAB/RpiB family. As to quaternary structure, heteromultimeric protein consisting of LacA and LacB.

The catalysed reaction is aldehydo-D-galactose 6-phosphate = keto-D-tagatose 6-phosphate. It functions in the pathway carbohydrate metabolism; D-galactose 6-phosphate degradation; D-tagatose 6-phosphate from D-galactose 6-phosphate: step 1/1. In Streptococcus pneumoniae (strain ATCC 700669 / Spain 23F-1), this protein is Galactose-6-phosphate isomerase subunit LacA.